The chain runs to 440 residues: Adenylosuccinate synthetase 1, chloroplastic (440 aa).

Residues 13-19 (GDEGKGK) and 41-43 (GHT) each bind GTP. Residue aspartate 14 is the Proton acceptor of the active site. Mg(2+)-binding residues include aspartate 14 and glycine 41. Residues 14–17 (DEGK), 39–42 (NAGH), threonine 135, arginine 149, glutamine 230, threonine 245, and arginine 313 contribute to the IMP site. Histidine 42 acts as the Proton donor in catalysis. 309–315 (TVTRRKR) serves as a coordination point for substrate. Residues arginine 315 and 341–343 (KLD) contribute to the GTP site.

It belongs to the adenylosuccinate synthetase family. As to quaternary structure, homodimer. Requires Mg(2+) as cofactor.

It is found in the plastid. The protein resides in the chloroplast. It carries out the reaction IMP + L-aspartate + GTP = N(6)-(1,2-dicarboxyethyl)-AMP + GDP + phosphate + 2 H(+). It participates in purine metabolism; AMP biosynthesis via de novo pathway; AMP from IMP: step 1/2. Its function is as follows. Plays an important role in the de novo pathway and in the salvage pathway of purine nucleotide biosynthesis. Catalyzes the first committed step in the biosynthesis of AMP from IMP. The polypeptide is Adenylosuccinate synthetase 1, chloroplastic (Ricinus communis (Castor bean)).